Reading from the N-terminus, the 210-residue chain is Ribonuclease HII (210 aa).

The RNase H type-2 domain maps to 2 to 203; sequence SGVMGIDEAG…YKRVESEVKQ (202 aa). The a divalent metal cation site is built by D8, E9, and D99.

Belongs to the RNase HII family. Mn(2+) serves as cofactor. The cofactor is Mg(2+).

Its subcellular location is the cytoplasm. It carries out the reaction Endonucleolytic cleavage to 5'-phosphomonoester.. Its function is as follows. Endonuclease that specifically degrades the RNA of RNA-DNA hybrids. The polypeptide is Ribonuclease HII (Methanopyrus kandleri (strain AV19 / DSM 6324 / JCM 9639 / NBRC 100938)).